The following is a 224-amino-acid chain: CRIB domain-containing protein RIC1 (224 aa).

In terms of domain architecture, CRIB spans 29–42; the sequence is IGFPTDVKHVAHIG. The tract at residues 38 to 224 is disordered; that stretch reads VAHIGSDGPT…SVDTTCNDII (187 aa). Composition is skewed to polar residues over residues 69–84, 114–132, 144–155, and 215–224; these read SRGNSNKYNPQGTNQR, PNHNGSPPRKSSGNAASSD, AHGSTDSSNDQE, and SVDTTCNDII.

Interacts with ARAC11/ROP1. In terms of tissue distribution, expressed in columella cells from the root tip and epidermal cells at the base of lateral roots, leaves, stems, flowers, anthers, pollen and siliques.

The protein resides in the cytoplasm. Its subcellular location is the cytoskeleton. Functions as a downstream effector of Rho-related GTP binding proteins of the 'Rho of Plants' (ROPs) family. Participates in the propagation of ROP GTPase signals in specific cellular responses. Required for cortical microtubule organization. Promotes microtubule bundling and formation of well-ordered microtubule arrays in the neck region of pavement cells. This restricts cell lateral expansion to generate the narrow neck morphology of pavement cells. Its function is inhibited when it interacts with activated ARAC4/ROP2. Represses ARAC4/ROP2 activation and antagonizes the RIC4-actin pathway that promotes the assembly of cortical actin microfilaments. Acts as a downstream effector of ARAC3/ROP6 which functions in a signaling pathway that negatively regulates clathrin-mediated endocytosis and internalization of PIN1 and PIN2. Required for the asymmetric auxin distribution during root gravitropism and vascular patterning. Positively regulates auxin responses, but negatively regulates ABA responses during lateral root development and primary root elongation. This is CRIB domain-containing protein RIC1 (RIC1) from Arabidopsis thaliana (Mouse-ear cress).